We begin with the raw amino-acid sequence, 160 residues long: Leucokinin (160 aa).

An N-terminal signal peptide occupies residues 1-19 (MAKIVLCMVLLAFGRQVYG). Positions 20 to 130 (ASLVPAPISE…RIKSQLQRDE (111 aa)) are excised as a propeptide. The residue at position 147 (Gly147) is a Glycine amide. The propeptide occupies 151–160 (SPEPPILPDY).

Its subcellular location is the secreted. In terms of biological role, acts through intracellular calcium in Malpighian tubule stellate cells to raise chloride conductance. The chain is Leucokinin (Lk) from Drosophila melanogaster (Fruit fly).